Consider the following 186-residue polypeptide: Ribosome-recycling factor (186 aa).

This sequence belongs to the RRF family.

It localises to the cytoplasm. Functionally, responsible for the release of ribosomes from messenger RNA at the termination of protein biosynthesis. May increase the efficiency of translation by recycling ribosomes from one round of translation to another. The sequence is that of Ribosome-recycling factor from Cupriavidus metallidurans (strain ATCC 43123 / DSM 2839 / NBRC 102507 / CH34) (Ralstonia metallidurans).